The chain runs to 723 residues: Catalase-peroxidase (723 aa).

Residues 98 to 226 (WHSAGSYRVG…LAAVMMGLIY (129 aa)) constitute a cross-link (tryptophyl-tyrosyl-methioninium (Trp-Tyr) (with M-252)). The active-site Proton acceptor is the His99. Positions 226-252 (YVNPEGVDGNPDPLKTAKDMRVTFARM) form a cross-link, tryptophyl-tyrosyl-methioninium (Tyr-Met) (with W-98). His267 serves as a coordination point for heme b.

Belongs to the peroxidase family. Peroxidase/catalase subfamily. Homodimer or homotetramer. Requires heme b as cofactor. In terms of processing, formation of the three residue Trp-Tyr-Met cross-link is important for the catalase, but not the peroxidase activity of the enzyme.

It catalyses the reaction H2O2 + AH2 = A + 2 H2O. It carries out the reaction 2 H2O2 = O2 + 2 H2O. Its function is as follows. Bifunctional enzyme with both catalase and broad-spectrum peroxidase activity. This Vibrio vulnificus (strain CMCP6) protein is Catalase-peroxidase.